Consider the following 297-residue polypeptide: Glutamyl-Q tRNA(Asp) synthetase (297 aa).

Residues 9–13 (RFAPS) and E45 contribute to the L-glutamate site. Positions 12-22 (PSPTGPLHFGS) match the 'HIGH' region motif. Residues C101, C103, and C118 each coordinate Zn(2+). Positions 170 and 188 each coordinate L-glutamate. Residues 226 to 230 (KLSKS) carry the 'KMSKS' region motif. K229 contributes to the ATP binding site.

The protein belongs to the class-I aminoacyl-tRNA synthetase family. GluQ subfamily. Zn(2+) is required as a cofactor.

Functionally, catalyzes the tRNA-independent activation of glutamate in presence of ATP and the subsequent transfer of glutamate onto a tRNA(Asp). Glutamate is transferred on the 2-amino-5-(4,5-dihydroxy-2-cyclopenten-1-yl) moiety of the queuosine in the wobble position of the QUC anticodon. In Xanthomonas campestris pv. campestris (strain 8004), this protein is Glutamyl-Q tRNA(Asp) synthetase.